We begin with the raw amino-acid sequence, 397 residues long: Myb family transcription factor PHL4 (397 aa).

Positions M1–N27 are disordered. The region spanning A228–Y288 is the HTH myb-type domain. Positions P259–R284 form a DNA-binding region, H-T-H motif. The tract at residues T319–L339 is coiled coil. The LHEQLE motif lies at L332–E337. Residues K359–E397 are disordered. The span at E386 to E397 shows a compositional bias: basic and acidic residues. S387 is modified (phosphoserine).

It belongs to the MYB-CC family.

The protein localises to the nucleus. Its function is as follows. Transcription factor involved in male gametophyte development. This Arabidopsis thaliana (Mouse-ear cress) protein is Myb family transcription factor PHL4.